The primary structure comprises 231 residues: uncharacterized protein (231 aa).

Residue 10–34 coordinates NADP(+); that stretch reads VVTGAGSGIGEAIATLLHEEGAKVV. Serine 140 is a substrate binding site. The Proton acceptor role is filled by tyrosine 153.

It belongs to the short-chain dehydrogenases/reductases (SDR) family.

This is an uncharacterized protein from Staphylococcus aureus (strain COL).